The chain runs to 400 residues: Tryptophan--tRNA ligase (400 aa).

Positions 12–20 (PTGALHLGH) match the 'HIGH' region motif. The tract at residues 173–241 (REPGFEQKAL…RLFGYLEGAR (69 aa)) is insert. Positions 265 to 269 (KMSKS) match the 'KMSKS' region motif. Lys-268 provides a ligand contact to ATP. The tract at residues 280-305 (KASVEKKVRTMPTDPARVRRTDPGDP) is disordered. The span at 295–304 (ARVRRTDPGD) shows a compositional bias: basic and acidic residues.

Belongs to the class-I aminoacyl-tRNA synthetase family. In terms of assembly, homodimer.

The protein resides in the cytoplasm. The enzyme catalyses tRNA(Trp) + L-tryptophan + ATP = L-tryptophyl-tRNA(Trp) + AMP + diphosphate + H(+). The protein is Tryptophan--tRNA ligase (trpS) of Ralstonia nicotianae (strain ATCC BAA-1114 / GMI1000) (Ralstonia solanacearum).